The sequence spans 311 residues: Mycinamicin-resistance protein MyrB (311 aa).

Residues asparagine 27, leucine 29, glycine 54, glutamate 75, and aspartate 98 each contribute to the S-adenosyl-L-methionine site. Residues 272–311 (PAPAGRSVRARPGSVGPDRSLPPRGLRSGPPRARRRGGGA) are disordered. Positions 293 to 302 (PPRGLRSGPP) are enriched in low complexity.

The protein belongs to the class I-like SAM-binding methyltransferase superfamily. rRNA adenine N(6)-methyltransferase family.

Functionally, confers resistance to macrolide, lincosamide and streptogramin B antibiotics. The protein is Mycinamicin-resistance protein MyrB (myrB) of Micromonospora griseorubida.